A 468-amino-acid chain; its full sequence is Beta-amylase (468 aa).

Residues 1 to 36 form the signal peptide; the sequence is MTLYRSLWKKGCMLLLSLVLSLTAFIGSPSNTASAA. Position 76 (Asp76) interacts with substrate. Residues Glu83 and Asp87 each coordinate Ca(2+). Substrate is bound by residues His116 and Asp124. A disulfide bond links Cys118 and Cys126. Glu170 provides a ligand contact to Ca(2+). The Proton donor role is filled by Glu198. Substrate contacts are provided by Lys314, His319, and Thr357. Residue Glu394 is the Proton acceptor of the active site. Residues 395-396 and Arg423 each bind substrate; that span reads NA.

Belongs to the glycosyl hydrolase 14 family. It depends on Ca(2+) as a cofactor.

It carries out the reaction Hydrolysis of (1-&gt;4)-alpha-D-glucosidic linkages in polysaccharides so as to remove successive maltose units from the non-reducing ends of the chains.. The protein is Beta-amylase of Cytobacillus firmus (Bacillus firmus).